We begin with the raw amino-acid sequence, 311 residues long: Ribonuclease Z (311 aa).

Residues H63, H65, D67, H68, H141, D212, and H270 each contribute to the Zn(2+) site. Residue D67 is the Proton acceptor of the active site.

The protein belongs to the RNase Z family. Homodimer. Requires Zn(2+) as cofactor.

The catalysed reaction is Endonucleolytic cleavage of RNA, removing extra 3' nucleotides from tRNA precursor, generating 3' termini of tRNAs. A 3'-hydroxy group is left at the tRNA terminus and a 5'-phosphoryl group is left at the trailer molecule.. Zinc phosphodiesterase, which displays some tRNA 3'-processing endonuclease activity. Probably involved in tRNA maturation, by removing a 3'-trailer from precursor tRNA. This chain is Ribonuclease Z, found in Lactiplantibacillus plantarum (strain ATCC BAA-793 / NCIMB 8826 / WCFS1) (Lactobacillus plantarum).